Reading from the N-terminus, the 498-residue chain is MASQGTKRSYEQMETDGERPNATEIRASVGKMIDGIGRFYIQMCTELKLSDYEGRLIQNSLTIERMVLSAFDERRNKYLEEHPSAGKDPKKTGGPIYKRVDGKWMRELVLYDKEEIRRIWRQANNGDDATAGLTHMMIWHSNLNDTTYQRTRALVRTGMDPRMCSLMQGSTLPRRSGAAGAAVKGVGTMVMELIRMIKRGINDRNFWRGENGRKTRSAYERMCNILKGKFQTAAQRAMMDQVRESRNPGNAEIEDLIFLARSALILRGSVAHKSCLPACVYGPAVASGYDFEKEGYSLVGIDPFKLLQNSQVYSLIRPNENPAHKSQLVWMACNSAAFEDLRVLSFIRGTKVSPRGKLSTRGVQIASNENMDTMGSSTLELRSRYWAIRTRSGGNTTQQRASAGQISVQPTFSVQRNLPFDKPTIMAAFTGNTEGRTSDMRAEIIRMMEGAKPEEMSFQGRGVFELSDEKATNPIVPSFDMSNEGSYFFGDNAEEYDN.

The short motif at 1–18 (MASQGTKRSYEQMETDGE) is the Unconventional nuclear localization signal element. The interval 1 to 22 (MASQGTKRSYEQMETDGERPNA) is disordered. Basic and acidic residues predominate over residues 8–21 (RSYEQMETDGERPN). A Bipartite nuclear localization signal motif is present at residues 198-216 (KRGINDRNFWRGENGRKTR).

The protein belongs to the influenza viruses nucleoprotein family. As to quaternary structure, homomultimerizes to form the nucleocapsid. May bind host exportin-1/XPO1. Binds to viral genomic RNA. Protein-RNA contacts are mediated by a combination of electrostatic interactions between positively charged residues and the phosphate backbone and planar interactions between aromatic side chains and bases. Post-translationally, late in virus-infected cells, may be cleaved from a 56-kDa protein to a 53-kDa protein by a cellular caspase. This cleavage might be a marker for the onset of apoptosis in infected cells or have a specific function in virus host interaction.

The protein localises to the virion. Its subcellular location is the host nucleus. Its function is as follows. Encapsidates the negative strand viral RNA, protecting it from nucleases. The encapsidated genomic RNA is termed the ribonucleoprotein (RNP) and serves as template for transcription and replication. The RNP needs to be localized in the host nucleus to start an infectious cycle, but is too large to diffuse through the nuclear pore complex. NP comprises at least 2 nuclear localization signals that are responsible for the active RNP import into the nucleus through cellular importin alpha/beta pathway. Later in the infection, nclear export of RNPs are mediated through viral proteins NEP interacting with M1 which binds nucleoproteins. It is possible that nucleoprotein binds directly host exportin-1/XPO1 and plays an active role in RNPs nuclear export. M1 interaction with RNP seems to hide nucleoprotein's nuclear localization signals. Soon after a virion infects a new cell, M1 dissociates from the RNP under acidification of the virion driven by M2 protein. Dissociation of M1 from RNP unmasks nucleoprotein's nuclear localization signals, targeting the RNP to the nucleus. This chain is Nucleoprotein, found in Aves (Human).